A 478-amino-acid polypeptide reads, in one-letter code: Phenylalanine--tRNA ligase alpha subunit (478 aa).

Residues Thr318, 357-359 (QLE), and Tyr397 each bind L-phenylalanine. Glu399 serves as a coordination point for Mg(2+). Phe422 provides a ligand contact to L-phenylalanine.

This sequence belongs to the class-II aminoacyl-tRNA synthetase family. Phe-tRNA synthetase alpha subunit type 2 subfamily. In terms of assembly, tetramer of two alpha and two beta subunits. It depends on Mg(2+) as a cofactor.

It localises to the cytoplasm. It catalyses the reaction tRNA(Phe) + L-phenylalanine + ATP = L-phenylalanyl-tRNA(Phe) + AMP + diphosphate + H(+). This chain is Phenylalanine--tRNA ligase alpha subunit, found in Methanospirillum hungatei JF-1 (strain ATCC 27890 / DSM 864 / NBRC 100397 / JF-1).